The primary structure comprises 269 residues: Phosphate import ATP-binding protein PstB (269 aa).

One can recognise an ABC transporter domain in the interval 14–253 (LSLENVSISY…EFNSTKKIFN (240 aa)). 46–53 (GPSGCGKS) provides a ligand contact to ATP.

It belongs to the ABC transporter superfamily. Phosphate importer (TC 3.A.1.7) family. As to quaternary structure, the complex is composed of two ATP-binding proteins (PstB), two transmembrane proteins (PstC and PstA) and a solute-binding protein (PstS).

It localises to the cell inner membrane. It catalyses the reaction phosphate(out) + ATP + H2O = ADP + 2 phosphate(in) + H(+). Part of the ABC transporter complex PstSACB involved in phosphate import. Responsible for energy coupling to the transport system. This is Phosphate import ATP-binding protein PstB from Prochlorococcus marinus (strain MIT 9312).